Here is a 152-residue protein sequence, read N- to C-terminus: Deoxyuridine 5'-triphosphate nucleotidohydrolase (152 aa).

Residues 72-74, Asn85, and 89-91 each bind substrate; these read RSG and TID.

Belongs to the dUTPase family. Requires Mg(2+) as cofactor.

It carries out the reaction dUTP + H2O = dUMP + diphosphate + H(+). It participates in pyrimidine metabolism; dUMP biosynthesis; dUMP from dCTP (dUTP route): step 2/2. This enzyme is involved in nucleotide metabolism: it produces dUMP, the immediate precursor of thymidine nucleotides and it decreases the intracellular concentration of dUTP so that uracil cannot be incorporated into DNA. The protein is Deoxyuridine 5'-triphosphate nucleotidohydrolase of Rhodopseudomonas palustris (strain BisB5).